We begin with the raw amino-acid sequence, 409 residues long: Nucleoprotein (409 aa).

4 disordered regions span residues 1–32, 47–84, 121–145, and 164–194; these read MASG…SSGN, PQPK…KSGR, ADTK…LRFS, and RSGR…GAED. The segment at 29 to 160 is RNA-binding; sequence SSGNASWFQA…GNFRWDFIPL (132 aa). In terms of domain architecture, CoV N NTD spans 31 to 156; the sequence is GNASWFQAIK…GGPDGNFRWD (126 aa). Residues 57 to 68 are compositionally biased toward polar residues; the sequence is PDNNNIKPSQQH. Positions 70–84 are enriched in basic residues; that stretch reads YWRRQARYKPGKSGR. Residues 164–179 show a composition bias toward low complexity; sequence RSGRSTAASSAASSRA. Basic and acidic residues predominate over residues 180 to 192; sequence PSREGSRGRRSGA. The residue at position 190 (S190) is a Phosphoserine; by host. The CoV N CTD domain occupies 215-331; that stretch reads TKAKADEMAH…QCVDGVGTRP (117 aa). A dimerization region spans residues 226-333; sequence RYCKRTIPPG…VDGVGTRPKD (108 aa). C320 and C323 are joined by a disulfide. A disordered region spans residues 326-409; sequence GVGTRPKDDE…GDSALGENEL (84 aa). The span at 358-367 shows a compositional bias: basic residues; the sequence is QRPKKEKKPK. Positions 368–384 are enriched in basic and acidic residues; that stretch reads KQDDEVDKALTSDEERN. The residue at position 378 (T378) is a Phosphothreonine; by host. S379 is modified (phosphoserine; by host).

Belongs to the gammacoronavirus nucleocapsid protein family. As to quaternary structure, homooligomer. Both monomeric and oligomeric forms interact with RNA. Interacts with protein M. Interacts with NSP3; this interaction serves to tether the genome to the newly translated replicase-transcriptase complex at a very early stage of infection. In terms of processing, ADP-ribosylated. The ADP-ribosylation is retained in the virion during infection. Post-translationally, phosphorylated on serine and threonine residues.

It localises to the virion. Its subcellular location is the host endoplasmic reticulum-Golgi intermediate compartment. The protein localises to the host Golgi apparatus. Packages the positive strand viral genome RNA into a helical ribonucleocapsid (RNP) and plays a fundamental role during virion assembly through its interactions with the viral genome and membrane protein M. Plays an important role in enhancing the efficiency of subgenomic viral RNA transcription as well as viral replication. In Gallus gallus (Chicken), this protein is Nucleoprotein.